Consider the following 718-residue polypeptide: Zinc finger protein 39 (718 aa).

One can recognise a KRAB domain in the interval V59 to D130. Residues F298–H320 form a C2H2-type 1 zinc finger. A C2H2-type 2; degenerate zinc finger spans residues H353–P375. 11 consecutive C2H2-type zinc fingers follow at residues Y409–H431, Y437–H459, Y465–H487, Y493–H515, Y521–H543, Y549–H571, Y577–H599, Y605–H627, Y633–H655, Y661–H683, and F689–H711.

In terms of tissue distribution, predominantly in the spermatocytes and spermatids of testes.

It localises to the nucleus. Functionally, a putative DNA-binding regulatory protein associated with meiosis in spermatogenesis. This Mus musculus (Mouse) protein is Zinc finger protein 39 (Zfp39).